Here is a 133-residue protein sequence, read N- to C-terminus: Transcriptional regulator MraZ (133 aa).

2 SpoVT-AbrB domains span residues 5-47 (TYEH…SKDD) and 76-119 (TVEI…SKNK).

It belongs to the MraZ family. In terms of assembly, forms oligomers.

The protein resides in the cytoplasm. The protein localises to the nucleoid. This Mycoplasma mycoides subsp. mycoides SC (strain CCUG 32753 / NCTC 10114 / PG1) protein is Transcriptional regulator MraZ.